The following is a 336-amino-acid chain: UPF0324 membrane protein SP_0034 (336 aa).

8 consecutive transmembrane segments (helical) span residues 65–84 (LLQY…QVFA), 91–113 (PVIL…FFAL), 118–140 (ATLV…APVI), 153–175 (VIFF…LHLS), 211–233 (SATI…LSYW), 249–271 (VFPL…TSLG), 286–305 (FLIV…VAMV), and 312–334 (ILLG…TLIG).

It belongs to the UPF0324 family.

It is found in the cell membrane. The polypeptide is UPF0324 membrane protein SP_0034 (Streptococcus pneumoniae serotype 4 (strain ATCC BAA-334 / TIGR4)).